The following is a 318-amino-acid chain: NADH-ubiquinone oxidoreductase chain 1 (318 aa).

Transmembrane regions (helical) follow at residues 2–22, 70–90, 100–120, 140–160, 172–192, 217–237, 253–273, and 294–314; these read FLVN…FLTL, MFIM…TPLP, LGVL…LWSG, ISYE…SGSF, LWLI…TLAE, GGSF…MNAI, EFYT…FLWI, and LPLT…TASI.

Belongs to the complex I subunit 1 family. As to quaternary structure, core subunit of respiratory chain NADH dehydrogenase (Complex I) which is composed of 45 different subunits.

It is found in the mitochondrion inner membrane. It carries out the reaction a ubiquinone + NADH + 5 H(+)(in) = a ubiquinol + NAD(+) + 4 H(+)(out). Core subunit of the mitochondrial membrane respiratory chain NADH dehydrogenase (Complex I) which catalyzes electron transfer from NADH through the respiratory chain, using ubiquinone as an electron acceptor. Essential for the catalytic activity and assembly of complex I. The polypeptide is NADH-ubiquinone oxidoreductase chain 1 (MT-ND1) (Emballonura alecto (Philippine sheath-tailed bat)).